A 338-amino-acid chain; its full sequence is Anthranilate phosphoribosyltransferase (338 aa).

Residues G81, 84 to 85 (GD), S89, 91 to 94 (NVST), 109 to 117 (KHGNRALSS), and A121 each bind 5-phospho-alpha-D-ribose 1-diphosphate. An anthranilate-binding site is contributed by G81. Residue S93 coordinates Mg(2+). N112 is an anthranilate binding site. R167 is a binding site for anthranilate. 2 residues coordinate Mg(2+): D226 and E227.

This sequence belongs to the anthranilate phosphoribosyltransferase family. Homodimer. It depends on Mg(2+) as a cofactor.

It catalyses the reaction N-(5-phospho-beta-D-ribosyl)anthranilate + diphosphate = 5-phospho-alpha-D-ribose 1-diphosphate + anthranilate. It participates in amino-acid biosynthesis; L-tryptophan biosynthesis; L-tryptophan from chorismate: step 2/5. Catalyzes the transfer of the phosphoribosyl group of 5-phosphorylribose-1-pyrophosphate (PRPP) to anthranilate to yield N-(5'-phosphoribosyl)-anthranilate (PRA). The sequence is that of Anthranilate phosphoribosyltransferase from Rhodopseudomonas palustris (strain TIE-1).